Reading from the N-terminus, the 673-residue chain is Xyloglucan glycosyltransferase 4 (673 aa).

2 helical membrane-spanning segments follow: residues 90–110 and 144–164; these read FIKACLVISIIALSIEIVAHF and IAPLVISLSRFCTVLFLIQSL. Residue D238 is part of the active site. Positions 297 and 299 each coordinate substrate. Residue D391 is part of the active site. The next 2 membrane-spanning stretches (helical) occupy residues 469-489 and 494-514; these read LILPFYSFTLFCIILPLTMFI and LPLWIICYVPIFISLLNILPS. The residue at position 581 (S581) is a Phosphoserine. The next 2 helical transmembrane spans lie at 623 to 643 and 648 to 668; these read VFKKELGLAFLLLTAAARSFL and LHFYFLLFQGLSFLVVGLDLI.

Belongs to the glycosyltransferase 2 family. Plant cellulose synthase-like C subfamily. Homodimer. Interacts with XXT5. Interacts with FUT1, MUR3 and XLT2. Expressed in seedlings, roots, leaves, stems, flowers and seeds.

Its subcellular location is the golgi apparatus membrane. In terms of biological role, beta-1,4-glucan synthase rather involved in the synthesis of the xyloglucan backbone than cellulose. Seems to work simultaneously with xyloglucan 6-xylosyltransferase. Xyloglucan is a noncellulosic polysaccharides of plant cell wall and consists of a glucan backbone substituted by xylose, galactose and fucose. Associates with other xyloglucan-synthesizing enzymes to form multiprotein complexes for xyloglucan synthesis in the Golgi. The polypeptide is Xyloglucan glycosyltransferase 4 (Arabidopsis thaliana (Mouse-ear cress)).